Reading from the N-terminus, the 292-residue chain is Shikimate dehydrogenase (NADP(+)) (292 aa).

Residues 25–27 (SKS) and threonine 72 contribute to the shikimate site. Lysine 76 serves as the catalytic Proton acceptor. Residues asparagine 97 and aspartate 113 each coordinate shikimate. NADP(+)-binding positions include 137 to 141 (GAGGA), 161 to 166 (NRTQSK), and methionine 230. Tyrosine 232 is a shikimate binding site. Glycine 254 provides a ligand contact to NADP(+).

The protein belongs to the shikimate dehydrogenase family. As to quaternary structure, homodimer.

It carries out the reaction shikimate + NADP(+) = 3-dehydroshikimate + NADPH + H(+). The protein operates within metabolic intermediate biosynthesis; chorismate biosynthesis; chorismate from D-erythrose 4-phosphate and phosphoenolpyruvate: step 4/7. In terms of biological role, involved in the biosynthesis of the chorismate, which leads to the biosynthesis of aromatic amino acids. Catalyzes the reversible NADPH linked reduction of 3-dehydroshikimate (DHSA) to yield shikimate (SA). In Shewanella sp. (strain MR-4), this protein is Shikimate dehydrogenase (NADP(+)).